The chain runs to 448 residues: Probable glycine dehydrogenase (decarboxylating) subunit 1 (448 aa).

The protein belongs to the GcvP family. N-terminal subunit subfamily. The glycine cleavage system is composed of four proteins: P, T, L and H. In this organism, the P 'protein' is a heterodimer of two subunits.

The catalysed reaction is N(6)-[(R)-lipoyl]-L-lysyl-[glycine-cleavage complex H protein] + glycine + H(+) = N(6)-[(R)-S(8)-aminomethyldihydrolipoyl]-L-lysyl-[glycine-cleavage complex H protein] + CO2. The glycine cleavage system catalyzes the degradation of glycine. The P protein binds the alpha-amino group of glycine through its pyridoxal phosphate cofactor; CO(2) is released and the remaining methylamine moiety is then transferred to the lipoamide cofactor of the H protein. The chain is Probable glycine dehydrogenase (decarboxylating) subunit 1 from Staphylococcus aureus (strain USA300).